We begin with the raw amino-acid sequence, 599 residues long: Elongation factor 4 (599 aa).

The tr-type G domain maps to 5–187 (KNIRNFSIIA…QLVERIPAPE (183 aa)). GTP contacts are provided by residues 17 to 22 (DHGKST) and 134 to 137 (NKID).

Belongs to the TRAFAC class translation factor GTPase superfamily. Classic translation factor GTPase family. LepA subfamily.

It localises to the cell inner membrane. The catalysed reaction is GTP + H2O = GDP + phosphate + H(+). In terms of biological role, required for accurate and efficient protein synthesis under certain stress conditions. May act as a fidelity factor of the translation reaction, by catalyzing a one-codon backward translocation of tRNAs on improperly translocated ribosomes. Back-translocation proceeds from a post-translocation (POST) complex to a pre-translocation (PRE) complex, thus giving elongation factor G a second chance to translocate the tRNAs correctly. Binds to ribosomes in a GTP-dependent manner. This is Elongation factor 4 from Alcanivorax borkumensis (strain ATCC 700651 / DSM 11573 / NCIMB 13689 / SK2).